Consider the following 603-residue polypeptide: Complement factor I (603 aa).

Residues 1 to 18 (MKLAHLSLFLLALHLSSS) form the signal peptide. Cystine bridges form between Cys-36–Cys-260, Cys-46–Cys-57, Cys-51–Cys-62, Cys-64–Cys-96, Cys-70–Cys-89, Cys-78–Cys-109, Cys-144–Cys-186, Cys-157–Cys-219, Cys-191–Cys-201, Cys-234–Cys-252, Cys-246–Cys-261, Cys-264–Cys-276, Cys-271–Cys-289, Cys-283–Cys-298, Cys-348–Cys-473, Cys-386–Cys-402, Cys-394–Cys-464, Cys-487–Cys-551, Cys-515–Cys-530, and Cys-541–Cys-570. The region spanning 58–111 (IEGTCICKLPYQCPRAGTPVCAMNGRSYPTYCHQKSFECLHPEIKFSHNGTCAA) is the Kazal-like domain. Asn-106, Asn-116, Asn-174, and Asn-182 each carry an N-linked (GlcNAc...) asparagine glycan. The region spanning 117-217 (VSLIYGRTKT…TELSNGLAGV (101 aa)) is the SRCR domain. 2 consecutive LDL-receptor class A domains span residues 218–262 (VCYK…LCCK) and 263–299 (GCRG…SRCE). Lys-244, Asn-247, Val-249, Asp-251, Asp-257, and Glu-258 together coordinate Ca(2+). A glycan (N-linked (GlcNAc...) asparagine) is linked at Asn-267. Residues Tyr-281, Asn-284, Glu-286, Asp-288, Asp-294, and Glu-295 each coordinate Ca(2+). In terms of domain architecture, Peptidase S1 spans 361 to 594 (VIGGKPANVG…YFDWISYHVG (234 aa)). Active-site charge relay system residues include His-401 and Asp-449. The N-linked (GlcNAc...) asparagine glycan is linked to Asn-514. The active-site Charge relay system is Ser-545. N-linked (GlcNAc...) asparagine glycosylation occurs at Asn-556.

Belongs to the peptidase S1 family. As to quaternary structure, heterodimer of a light and heavy chains; disulfide-linked. The fully processed and mature protein circulates as a zymogen, and is allosterically activated by substrate-induced remodeling of the active site. Interacts with C3b. Interacts with complement factor H. As to expression, expressed in the liver by hepatocytes. Also present in other cells such as monocytes, fibroblasts or keratinocytes.

The protein resides in the secreted. Its subcellular location is the extracellular space. The enzyme catalyses Inactivates complement subcomponents C3b, iC3b and C4b by proteolytic cleavage.. Its function is as follows. Trypsin-like serine protease that plays an essential role in regulating the immune response by controlling all complement pathways. Inhibits these pathways by cleaving three peptide bonds in the alpha-chain of C3b and two bonds in the alpha-chain of C4b thereby inactivating these proteins. Essential cofactors for these reactions include factor H and C4BP in the fluid phase and membrane cofactor protein/CD46 and CR1 on cell surfaces. The presence of these cofactors on healthy cells allows degradation of deposited C3b by CFI in order to prevent undesired complement activation, while in apoptotic cells or microbes, the absence of such cofactors leads to C3b-mediated complement activation and subsequent opsonization. This chain is Complement factor I (Cfi), found in Mus musculus (Mouse).